A 29-amino-acid chain; its full sequence is Cyclotide vibi-A (29 aa).

Positions 1–29 (GLPVCGETCFGGTCNTPGCSCSYPICTRN) form a cross-link, cyclopeptide (Gly-Asn). 3 disulfides stabilise this stretch: C5–C19, C9–C21, and C14–C26.

In terms of processing, this is a cyclic peptide.

Its function is as follows. Probably participates in a plant defense mechanism. The sequence is that of Cyclotide vibi-A from Viola biflora (Yellow wood violet).